Reading from the N-terminus, the 244-residue chain is Ribosomal RNA large subunit methyltransferase E (244 aa).

S-adenosyl-L-methionine contacts are provided by Gly81, Trp83, Asp109, Asp125, and Asp149. Lys189 functions as the Proton acceptor in the catalytic mechanism.

This sequence belongs to the class I-like SAM-binding methyltransferase superfamily. RNA methyltransferase RlmE family.

It is found in the cytoplasm. It carries out the reaction uridine(2552) in 23S rRNA + S-adenosyl-L-methionine = 2'-O-methyluridine(2552) in 23S rRNA + S-adenosyl-L-homocysteine + H(+). Functionally, specifically methylates the uridine in position 2552 of 23S rRNA at the 2'-O position of the ribose in the fully assembled 50S ribosomal subunit. This is Ribosomal RNA large subunit methyltransferase E from Cereibacter sphaeroides (strain ATCC 17029 / ATH 2.4.9) (Rhodobacter sphaeroides).